The primary structure comprises 649 residues: Endoglucanase D (649 aa).

The N-terminal stretch at 1-41 (MSRMTLKSSMKKRVLSLLIAVVFLSLTGVFPSGLIETKVSA) is a signal peptide. Asp201 serves as the catalytic Nucleophile. Catalysis depends on residues His516 and Asp546. Glu555 serves as the catalytic Proton donor. One can recognise a Dockerin domain in the interval 579-649 (NEVLYGDVND…LIRVIEKLPI (71 aa)).

The protein belongs to the glycosyl hydrolase 9 (cellulase E) family. The cofactor is Ca(2+).

The catalysed reaction is Endohydrolysis of (1-&gt;4)-beta-D-glucosidic linkages in cellulose, lichenin and cereal beta-D-glucans.. This enzyme catalyzes the endohydrolysis of 1,4-beta-glucosidic linkages in cellulose, lichenin and cereal beta-D-glucans. The polypeptide is Endoglucanase D (celD) (Acetivibrio thermocellus (strain ATCC 27405 / DSM 1237 / JCM 9322 / NBRC 103400 / NCIMB 10682 / NRRL B-4536 / VPI 7372) (Clostridium thermocellum)).